The sequence spans 448 residues: Putative F-box/LRR-repeat protein At5g25860 (448 aa).

Residues 11–58 enclose the F-box domain; the sequence is RDAVNCLPDEILAKILSYLPTKRAVSTSLISKRWRNLFALMIQLFESQ. LRR repeat units lie at residues 82 to 106, 185 to 214, 215 to 240, 310 to 341, and 342 to 367; these read QESFGDFVDKTLTDCNTIKKLSILC, FLHAIWFACERLCHSMLPGCPILEELFLHD, LRGYRYNDSPNFSISHKTLKRLTVHF, TLSLSPASVKMMYSRCVELHVFSNLVKLYFES, and NEKEGWEVLPRLLNKSPKLETLVLKG.

In Arabidopsis thaliana (Mouse-ear cress), this protein is Putative F-box/LRR-repeat protein At5g25860.